The primary structure comprises 151 residues: Putative pre-16S rRNA nuclease (151 aa).

Belongs to the YqgF nuclease family.

The protein localises to the cytoplasm. Functionally, could be a nuclease involved in processing of the 5'-end of pre-16S rRNA. This Pelagibacter ubique (strain HTCC1062) protein is Putative pre-16S rRNA nuclease.